Consider the following 586-residue polypeptide: Glutamate--tRNA ligase (586 aa).

The segment at 84-111 (LTDIESEDTTDTYDLPSLPGVSDDEPTQ) is disordered. A compositionally biased stretch (acidic residues) spans 85–94 (TDIESEDTTD). A 'HIGH' region motif is present at residues 119–129 (PNPNGPWHIGH).

Belongs to the class-I aminoacyl-tRNA synthetase family. Glutamate--tRNA ligase type 2 subfamily.

The protein localises to the cytoplasm. It carries out the reaction tRNA(Glu) + L-glutamate + ATP = L-glutamyl-tRNA(Glu) + AMP + diphosphate. Catalyzes the attachment of glutamate to tRNA(Glu) in a two-step reaction: glutamate is first activated by ATP to form Glu-AMP and then transferred to the acceptor end of tRNA(Glu). The polypeptide is Glutamate--tRNA ligase (Haloquadratum walsbyi (strain DSM 16790 / HBSQ001)).